We begin with the raw amino-acid sequence, 367 residues long: bZIP transcription factor 18 (367 aa).

The segment at 1-57 (MEDPSNPQPNQSNLSQCPPLATAPTPAPVRGPYHRRAHSEVQFRLPEDLDLSEPFGG) is disordered. Over residues 38-47 (HSEVQFRLPE) the composition is skewed to basic and acidic residues. Ser-70 is modified (phosphoserine). Residues 79 to 124 (SGSGSASDSAGPSAPRSDNPFSAENGGAEAGNSRPRHRHSLSVDGS) are disordered. Residues 82 to 96 (GSASDSAGPSAPRSD) show a composition bias toward low complexity. In terms of domain architecture, bZIP spans 148–211 (DPKRAKRIIA…TGLSSENTEL (64 aa)). Residues 150 to 171 (KRAKRIIANRQSAARSKERKAR) form a basic motif region. A coiled-coil region spans residues 166-245 (KERKARYILE…VERLKFATGE (80 aa)). The interval 176 to 190 (LERKVQTLQTEATTL) is leucine-zipper. Composition is skewed to polar residues over residues 294–309 (QPNN…NPPT), 317–328 (ATSNAPAQSHSY), and 354–367 (FGRS…SSTM). Disordered stretches follow at residues 294–330 (QPNN…SYSE) and 343–367 (LDIS…SSTM).

In terms of assembly, interacts with NEAP1. Forms homodimer and heterodimer with bZIP34 and bZIP61. Ubiquitous. Strongly expressed in mature pollen.

Its subcellular location is the nucleus. The protein resides in the nucleoplasm. It localises to the cytoplasm. The protein localises to the perinuclear region. Functionally, transcription factor that may participate with bZIP34 in the gametophytic control of pollen development. This chain is bZIP transcription factor 18, found in Arabidopsis thaliana (Mouse-ear cress).